The chain runs to 267 residues: Lectin SfL-2 (267 aa).

4 repeat units span residues 1-67, 68-135, 136-202, and 203-267. A 4 X approximate tandem repeats region spans residues 1–267; it reads GRYTVQNQWG…GPIGFKGVAN (267 aa).

As to quaternary structure, monomer.

Its function is as follows. Lectin specific for high mannose N-glycans, recognizes the branched moiety of these glycans. Does not recognize other types of N-glycans or monosaccharides. The sequence is that of Lectin SfL-2 from Solieria filiformis (Red alga).